The primary structure comprises 151 residues: 6,7-dimethyl-8-ribityllumazine synthase (151 aa).

Residues phenylalanine 23, 55–57 (AYE), and 79–81 (AVI) each bind 5-amino-6-(D-ribitylamino)uracil. Position 84-85 (84-85 (AT)) interacts with (2S)-2-hydroxy-3-oxobutyl phosphate. The active-site Proton donor is the histidine 87. Position 111 (phenylalanine 111) interacts with 5-amino-6-(D-ribitylamino)uracil. Arginine 125 provides a ligand contact to (2S)-2-hydroxy-3-oxobutyl phosphate.

It belongs to the DMRL synthase family.

The catalysed reaction is (2S)-2-hydroxy-3-oxobutyl phosphate + 5-amino-6-(D-ribitylamino)uracil = 6,7-dimethyl-8-(1-D-ribityl)lumazine + phosphate + 2 H2O + H(+). It participates in cofactor biosynthesis; riboflavin biosynthesis; riboflavin from 2-hydroxy-3-oxobutyl phosphate and 5-amino-6-(D-ribitylamino)uracil: step 1/2. Catalyzes the formation of 6,7-dimethyl-8-ribityllumazine by condensation of 5-amino-6-(D-ribitylamino)uracil with 3,4-dihydroxy-2-butanone 4-phosphate. This is the penultimate step in the biosynthesis of riboflavin. In Leptospira interrogans serogroup Icterohaemorrhagiae serovar copenhageni (strain Fiocruz L1-130), this protein is 6,7-dimethyl-8-ribityllumazine synthase.